Reading from the N-terminus, the 475-residue chain is Probable proline--tRNA ligase, mitochondrial (475 aa).

The transit peptide at 1 to 29 (MEGLLTRCRALPALATCSRQLSGYVPCRF) directs the protein to the mitochondrion.

It belongs to the class-II aminoacyl-tRNA synthetase family.

The protein resides in the mitochondrion matrix. The catalysed reaction is tRNA(Pro) + L-proline + ATP = L-prolyl-tRNA(Pro) + AMP + diphosphate. Its function is as follows. Mitochondrial aminoacyl-tRNA synthetase that catalyzes the specific attachment of the proline amino acid (aa) to the homologous transfer RNA (tRNA), further participating in protein synthesis. The reaction occurs in a two steps: proline is first activated by ATP to form Pro-AMP and then transferred to the acceptor end of tRNA(Pro). This is Probable proline--tRNA ligase, mitochondrial from Homo sapiens (Human).